The following is a 238-amino-acid chain: Alpha-tubulin N-acetyltransferase (238 aa).

Residues 1 to 196 (MEFDFDISQS…NNFVVFEDLF (196 aa)) enclose the N-acetyltransferase domain. Acetyl-CoA is bound by residues 129-142 (FYVH…GNGK) and 165-174 (SFKFLSFLQK).

It belongs to the acetyltransferase ATAT1 family.

The enzyme catalyses L-lysyl-[alpha-tubulin] + acetyl-CoA = N(6)-acetyl-L-lysyl-[alpha-tubulin] + CoA + H(+). In terms of biological role, specifically acetylates 'Lys-40' in alpha-tubulin on the lumenal side of microtubules. Promotes microtubule destabilization and accelerates microtubule dynamics; this activity may be independent of acetylation activity. Acetylates alpha-tubulin with a slow enzymatic rate, due to a catalytic site that is not optimized for acetyl transfer. Enters the microtubule through each end and diffuses quickly throughout the lumen of microtubules. Acetylates only long/old microtubules because of its slow acetylation rate since it does not have time to act on dynamically unstable microtubules before the enzyme is released. In Trichoplax adhaerens (Trichoplax reptans), this protein is Alpha-tubulin N-acetyltransferase.